Consider the following 867-residue polypeptide: GRB2-associated and regulator of MAPK protein 1 (867 aa).

The interval 12–322 (NNITWSTTTL…GLLQGESWFE (311 aa)) is CABIT. A Phosphotyrosine modification is found at tyrosine 464. Disordered stretches follow at residues 511–530 (SADVNLPPPPVPPKSEAVKE), 536–594 (DAPP…QIES), and 735–758 (PPRTPKCTDAKKDAEAATTDTADA). Composition is skewed to polar residues over residues 544-554 (SSKQAGSSSAT) and 569-581 (SPSPTLSYYSSGL). Positions 740 to 749 (KCTDAKKDAE) are enriched in basic and acidic residues. Residues 802–867 (ISIEEISKSL…QFINGWRPKM (66 aa)) enclose the SAM domain.

Belongs to the GAREM family.

Functionally, adapter protein that may provide a link between cell surface epidermal growth factor receptor and the MAPK/ERK signaling pathway. May promote cell proliferation. The polypeptide is GRB2-associated and regulator of MAPK protein 1 (garem1) (Danio rerio (Zebrafish)).